A 244-amino-acid chain; its full sequence is Uridylate kinase (244 aa).

ATP is bound at residue 12–15 (KLSG). The segment at 20-25 (GERGVG) is involved in allosteric activation by GTP. Residue G54 participates in UMP binding. G55 and R59 together coordinate ATP. UMP is bound by residues D74 and 135–142 (IGSPYFST). ATP is bound by residues N163, Y169, and D172.

This sequence belongs to the UMP kinase family. As to quaternary structure, homohexamer.

It is found in the cytoplasm. It carries out the reaction UMP + ATP = UDP + ADP. The protein operates within pyrimidine metabolism; CTP biosynthesis via de novo pathway; UDP from UMP (UMPK route): step 1/1. With respect to regulation, allosterically activated by GTP. Inhibited by UTP. Its function is as follows. Catalyzes the reversible phosphorylation of UMP to UDP. The protein is Uridylate kinase of Streptococcus suis (strain 98HAH33).